We begin with the raw amino-acid sequence, 277 residues long: Indole-3-glycerol phosphate synthase (277 aa).

It belongs to the TrpC family.

It catalyses the reaction 1-(2-carboxyphenylamino)-1-deoxy-D-ribulose 5-phosphate + H(+) = (1S,2R)-1-C-(indol-3-yl)glycerol 3-phosphate + CO2 + H2O. It participates in amino-acid biosynthesis; L-tryptophan biosynthesis; L-tryptophan from chorismate: step 4/5. In Pseudomonas putida (strain W619), this protein is Indole-3-glycerol phosphate synthase.